Reading from the N-terminus, the 81-residue chain is U10-myrmicitoxin-Mri1b (81 aa).

The signal sequence occupies residues 1–26; sequence MRLSYISLTLAIIFVMAIVHAPETEA. A propeptide spanning residues 27–52 is cleaved from the precursor; it reads KAYPEADAVAEAIAVGEADAVGVADP. V80 is modified (valine amide).

It belongs to the formicidae venom precursor-01 superfamily. In terms of tissue distribution, expressed by the venom gland.

It is found in the secreted. Functionally, induces paralysis after injection into blowflies (L.caesar), and then death within 24 hours. May have antimicrobial properties, like most ant linear peptides. In Manica rubida (European giant red ant), this protein is U10-myrmicitoxin-Mri1b.